The following is a 210-amino-acid chain: UPF0502 protein Sama_1967 (210 aa).

Belongs to the UPF0502 family.

This is UPF0502 protein Sama_1967 from Shewanella amazonensis (strain ATCC BAA-1098 / SB2B).